The chain runs to 512 residues: Maturase K (512 aa).

It belongs to the intron maturase 2 family. MatK subfamily.

It is found in the plastid. The protein localises to the chloroplast. In terms of biological role, usually encoded in the trnK tRNA gene intron. Probably assists in splicing its own and other chloroplast group II introns. In Koelreuteria paniculata (Goldenrain tree), this protein is Maturase K.